A 237-amino-acid chain; its full sequence is Phosphoribosylaminoimidazole-succinocarboxamide synthase (237 aa).

It belongs to the SAICAR synthetase family.

The catalysed reaction is 5-amino-1-(5-phospho-D-ribosyl)imidazole-4-carboxylate + L-aspartate + ATP = (2S)-2-[5-amino-1-(5-phospho-beta-D-ribosyl)imidazole-4-carboxamido]succinate + ADP + phosphate + 2 H(+). The protein operates within purine metabolism; IMP biosynthesis via de novo pathway; 5-amino-1-(5-phospho-D-ribosyl)imidazole-4-carboxamide from 5-amino-1-(5-phospho-D-ribosyl)imidazole-4-carboxylate: step 1/2. The protein is Phosphoribosylaminoimidazole-succinocarboxamide synthase of Listeria monocytogenes serotype 4b (strain CLIP80459).